Consider the following 247-residue polypeptide: MAANAEPQQTQPAKHSEVGHKSLLQSDALYQYILETSVYPREPESMKELREITAKHPWNLMTTSADEGQFLNMLLKLINAKNTMEIGVYTGYSLLATALALPDDGKILAMDINRENFEIGLPVIEKAGLAHKIDFREGPALPLLDQLVQDEKNHGTYDFIFVDADKDNYINYHKRLIDLVKVGGLIGYDNTLWNGSVVAPADAPLRKYVRYYRDFVLELNKALAVDPRVEICMLPVGDGITLCRRVS.

K21 contacts substrate. S-adenosyl-L-methionine contacts are provided by residues T63, E85, 87-88 (GV), S93, D111, and A140. D163 serves as a coordination point for substrate. A divalent metal cation is bound at residue D163. D165 lines the S-adenosyl-L-methionine pocket. 2 residues coordinate a divalent metal cation: D189 and N190. Residue N194 participates in substrate binding.

This sequence belongs to the class I-like SAM-binding methyltransferase superfamily. Cation-dependent O-methyltransferase family. CCoAMT subfamily. A divalent metal cation serves as cofactor.

It catalyses the reaction (E)-caffeoyl-CoA + S-adenosyl-L-methionine = (E)-feruloyl-CoA + S-adenosyl-L-homocysteine + H(+). It participates in aromatic compound metabolism; phenylpropanoid biosynthesis. In terms of biological role, methylates caffeoyl-CoA to feruloyl-CoA and 5-hydroxyferuloyl-CoA to sinapoyl-CoA. Plays a role in the synthesis of feruloylated polysaccharides. Involved in the reinforcement of the plant cell wall. Also involved in the responding to wounding or pathogen challenge by the increased formation of cell wall-bound ferulic acid polymers. The sequence is that of Caffeoyl-CoA O-methyltransferase 2 (CCOAOMT2) from Eucalyptus globulus (Tasmanian blue gum).